Consider the following 37-residue polypeptide: Cytochrome b6-f complex subunit 5 (37 aa).

The helical transmembrane segment at 5–25 (LLFGIVLGLIPITLAGLFVTA) threads the bilayer.

The protein belongs to the PetG family. As to quaternary structure, the 4 large subunits of the cytochrome b6-f complex are cytochrome b6, subunit IV (17 kDa polypeptide, PetD), cytochrome f and the Rieske protein, while the 4 small subunits are PetG, PetL, PetM and PetN. The complex functions as a dimer.

The protein resides in the plastid. Its subcellular location is the chloroplast thylakoid membrane. In terms of biological role, component of the cytochrome b6-f complex, which mediates electron transfer between photosystem II (PSII) and photosystem I (PSI), cyclic electron flow around PSI, and state transitions. PetG is required for either the stability or assembly of the cytochrome b6-f complex. In Lemna minor (Common duckweed), this protein is Cytochrome b6-f complex subunit 5.